Here is a 152-residue protein sequence, read N- to C-terminus: Ribosome maturation factor RimP (152 aa).

Belongs to the RimP family.

It localises to the cytoplasm. In terms of biological role, required for maturation of 30S ribosomal subunits. In Citrobacter koseri (strain ATCC BAA-895 / CDC 4225-83 / SGSC4696), this protein is Ribosome maturation factor RimP.